The following is a 289-amino-acid chain: Ribosomal RNA small subunit methyltransferase A (289 aa).

Asn21, Leu23, Gly48, Glu69, Asp94, and Asn120 together coordinate S-adenosyl-L-methionine.

The protein belongs to the class I-like SAM-binding methyltransferase superfamily. rRNA adenine N(6)-methyltransferase family. RsmA subfamily.

Its subcellular location is the cytoplasm. The catalysed reaction is adenosine(1518)/adenosine(1519) in 16S rRNA + 4 S-adenosyl-L-methionine = N(6)-dimethyladenosine(1518)/N(6)-dimethyladenosine(1519) in 16S rRNA + 4 S-adenosyl-L-homocysteine + 4 H(+). Functionally, specifically dimethylates two adjacent adenosines (A1518 and A1519) in the loop of a conserved hairpin near the 3'-end of 16S rRNA in the 30S particle. May play a critical role in biogenesis of 30S subunits. This Actinobacillus pleuropneumoniae serotype 5b (strain L20) protein is Ribosomal RNA small subunit methyltransferase A.